The chain runs to 478 residues: Putative L-amino-acid oxidase YobN (478 aa).

FAD contacts are provided by residues Ser34, Glu53, Arg61, and 80–81 (MR). Arg81 and Tyr369 together coordinate substrate. FAD is bound by residues Glu451 and 460–463 (MQGA).

Belongs to the flavin monoamine oxidase family. FIG1 subfamily. The cofactor is FAD.

The enzyme catalyses an L-alpha-amino acid + O2 + H2O = a 2-oxocarboxylate + H2O2 + NH4(+). The protein is Putative L-amino-acid oxidase YobN (yobN) of Bacillus subtilis (strain 168).